The primary structure comprises 3354 residues: Cadherin-23 (3354 aa).

The N-terminal stretch at 1 to 23 (MRYSLVTCYAVLWLLMLVPGSWG) is a signal peptide. The Extracellular portion of the chain corresponds to 24–3064 (QVNRLPFFTN…SVQLPDDMSA (3041 aa)). Cadherin domains are found at residues 34–132 (HFFD…APTF), 133–236 (HNQP…DPIF), 237–348 (INLP…APEF), 349–460 (NSSE…RPIF), 461–561 (SQPL…VPTF), 562–671 (QKDA…PPTF), 672–784 (SKPA…APYY), 779–890 (KDAP…DPTF), 891–995 (RNLP…TPTF), 996–1102 (FPAV…RPIF), 1103–1208 (LQSS…APVF), 1210–1313 (QQQY…AVQF), 1314–1418 (SNAS…SPRF), 1420–1527 (FTSD…PPVI), 1529–1634 (SPFG…APVF), 1635–1744 (QQPH…VPTF), 1745–1851 (PRDY…DPVL), 1852–1959 (LNLP…HPLF), 1960–2069 (TEGT…WPTF), 2070–2174 (SPPT…RPEF), 2175–2293 (LNPI…TPQF), 2297–2402 (GITY…NPIF), 2403–2509 (DQPS…RPQF), 2510–2611 (SKPQ…RPVF), 2614–2722 (PPNG…EPLF), 2729–2846 (SPQY…PPRF), and 2847–2975 (TKAE…EEEF). N-linked (GlcNAc...) asparagine glycosylation is found at Asn155 and Asn206. N-linked (GlcNAc...) asparagine glycans are attached at residues Asn349, Asn393, Asn434, Asn466, Asn472, Asn602, Asn694, Asn765, Asn810, Asn827, Asn941, Asn1001, Asn1018, Asn1171, Asn1282, Asn1315, Asn1473, Asn1534, Asn1651, Asn1667, Asn1818, Asn1857, Asn1889, Asn1902, Asn2014, Asn2050, Asn2129, Asn2168, Asn2195, Asn2263, Asn2357, and Asn2369. Asn2578, Asn2616, Asn2749, Asn2808, Asn2877, Asn2896, Asn2941, and Asn2981 each carry an N-linked (GlcNAc...) asparagine glycan. A helical membrane pass occupies residues 3065–3085 (LQMAIIVLAILLFLAAMLFVL). The Cytoplasmic portion of the chain corresponds to 3086 to 3354 (MNWYYRTIHK…MESPLEITEL (269 aa)).

In terms of assembly, interacts with USH1C and USH1G. antiparallel heterodimer with PCDH15. Isoform C1: Interacts with CAMSAP3; leading to inhibit CAMSAP3 ability to induce microtubule bundle formation. In adult animals relatively high levels of expression are found in testis, skeletal muscle, heart, eye and thymus, and lower expression in kidney, lung and brain. Found in the sensory hair cells of the inner ear.

It localises to the cell membrane. Functionally, cadherins are calcium-dependent cell adhesion proteins. They preferentially interact with themselves in a homophilic manner in connecting cells. CDH23 is required for establishing and/or maintaining the proper organization of the stereocilia bundle of hair cells in the cochlea and the vestibule during late embryonic/early postnatal development. It is part of the functional network formed by USH1C, USH1G, CDH23 and MYO7A that mediates mechanotransduction in cochlear hair cells. Required for normal hearing. This Mus musculus (Mouse) protein is Cadherin-23 (Cdh23).